Reading from the N-terminus, the 82-residue chain is Small ribosomal subunit protein uS17 (82 aa).

Belongs to the universal ribosomal protein uS17 family. In terms of assembly, part of the 30S ribosomal subunit.

Functionally, one of the primary rRNA binding proteins, it binds specifically to the 5'-end of 16S ribosomal RNA. The sequence is that of Small ribosomal subunit protein uS17 from Tolumonas auensis (strain DSM 9187 / NBRC 110442 / TA 4).